The following is a 253-amino-acid chain: Testis-expressed protein 47 (253 aa).

This Mus musculus (Mouse) protein is Testis-expressed protein 47 (Tex47).